Here is a 46-residue protein sequence, read N- to C-terminus: MKSKIALSCEKCKIKNYKTNKSIIERLELKKFCSRCKEHTIHKEEK.

This sequence belongs to the bacterial ribosomal protein bL33 family.

This chain is Large ribosomal subunit protein bL33B (rpmG2), found in Mycoplasmopsis pulmonis (strain UAB CTIP) (Mycoplasma pulmonis).